A 768-amino-acid polypeptide reads, in one-letter code: Cullin-3-B (768 aa).

A disordered region spans residues 677–698; sequence VAAKQGESDPERKETRQKVDDD. Basic and acidic residues predominate over residues 682 to 698; that stretch reads GESDPERKETRQKVDDD. In terms of domain architecture, Cullin neddylation spans 698–760; that stretch reads DRKHEIEAAI…REYLARTPED (63 aa). Residue lysine 712 forms a Glycyl lysine isopeptide (Lys-Gly) (interchain with G-Cter in NEDD8) linkage.

Belongs to the cullin family. Component of multiple BCR (BTB-CUL3-RBX1) E3 ubiquitin-protein ligase complexes formed of cul3, rbx1 and a variable BTB domain-containing protein acting as both, adapter to cullin and substrate recognition subunit. Interacts with btbd6. In terms of processing, neddylated. Attachment of NEDD8 is required for the E3 ubiquitin-protein ligase activity of the SCF-like complex.

Its subcellular location is the nucleus. It functions in the pathway protein modification; protein ubiquitination. Functionally, probable core component of cullin-based SCF-like E3 ubiquitin-protein ligase complexes which mediate the ubiquitination and subsequent proteasomal degradation of target proteins. The E3 ubiquitin-protein ligase activity of the complex is dependent on the neddylation of the cullin subunit. Involved in ER-Golgi transport by regulating the size of COPII coats, thereby playing a key role in collagen export, which is required for embryonic stem (ES) cells division. May play a role in the regulation of mittotic entry via ubiquitination of aurka. This Xenopus laevis (African clawed frog) protein is Cullin-3-B (cul3b).